The primary structure comprises 723 residues: Catalase-peroxidase (723 aa).

Positions 98-226 (WHSAGSYRVG…LAAVMMGLIY (129 aa)) form a cross-link, tryptophyl-tyrosyl-methioninium (Trp-Tyr) (with M-252). His-99 serves as the catalytic Proton acceptor. A cross-link (tryptophyl-tyrosyl-methioninium (Tyr-Met) (with W-98)) is located at residues 226–252 (YVNPEGVDGNPDPLKTAKDMRVTFARM). His-267 contributes to the heme b binding site.

It belongs to the peroxidase family. Peroxidase/catalase subfamily. Homodimer or homotetramer. Heme b is required as a cofactor. Formation of the three residue Trp-Tyr-Met cross-link is important for the catalase, but not the peroxidase activity of the enzyme.

It catalyses the reaction H2O2 + AH2 = A + 2 H2O. The enzyme catalyses 2 H2O2 = O2 + 2 H2O. Bifunctional enzyme with both catalase and broad-spectrum peroxidase activity. The protein is Catalase-peroxidase of Vibrio vulnificus (strain CMCP6).